We begin with the raw amino-acid sequence, 408 residues long: MRSSCVLLAALLALVAYYVYIPLPSAVSDPWKLMLLDATFRGAQQVSNLIHSLGLSHHLITLNFIIISFGKKSARSSPRVKVTDTDFDGVEVRVFEGPPKPDEPLRRSVVYIHGGGWALASAKISYYDQLCTAMAEELNAVIVSIEYRLVPQVYFPEQIHDVIRATKYFLQPEVLDKYKVDPGRVGVSGDSAGGNLAAALGQQFTYVESLKNKLKLQALIYPVLQALDFNTPSYQQSMNTPILPRHVMVRYWVDYFKGNYDFVEAMIVNNHTSLDVERAAALRARLDWTSLLPSSIKKNYKPVLQTIGDARIVKEIPQLLDAAASPLIAEQEVLQALPKTYILTCEHDVLRDDGIMYAKRLESAGVNVTLDHFEDGFHGCMIFTSWPTNFSVGIRTRDSYFKWLDQNL.

The Cytoplasmic segment spans residues 1-4; that stretch reads MRSS. A helical; Signal-anchor for type II membrane protein membrane pass occupies residues 5-25; it reads CVLLAALLALVAYYVYIPLPS. At 26–408 the chain is on the lumenal side; the sequence is AVSDPWKLML…SYFKWLDQNL (383 aa). The short motif at 113-115 is the Involved in the stabilization of the negatively charged intermediate by the formation of the oxyanion hole element; that stretch reads HGG. The active site involves Ser191. Residue Asn270 is glycosylated (N-linked (GlcNAc...) asparagine). The active site involves Asp348. N-linked (GlcNAc...) asparagine glycosylation is present at Asn367. The active site involves His378. An N-linked (GlcNAc...) asparagine glycan is attached at Asn389.

This sequence belongs to the 'GDXG' lipolytic enzyme family. In terms of processing, N-glycosylated.

It is found in the cell membrane. Its subcellular location is the microsome. The enzyme catalyses a 1-O-alkyl-2-acetyl-sn-glycerol + H2O = a 1-O-alkyl-sn-glycerol + acetate + H(+). It catalyses the reaction 1-O-hexadecyl-2-acetyl-sn-glycerol + H2O = 1-O-hexadecyl-sn-glycerol + acetate + H(+). The catalysed reaction is a cholesterol ester + H2O = cholesterol + a fatty acid + H(+). It carries out the reaction cholesteryl (9Z-octadecenoate) + H2O = cholesterol + (9Z)-octadecenoate + H(+). In terms of biological role, hydrolyzes 2-acetyl monoalkylglycerol ether (1-O-alkyl-2-acetyl-sn-glycerol), the penultimate precursor of the pathway for de novo synthesis of platelet-activating factor. May be responsible for the hydrolysis of cholesterol esters (such as cholesteryl (9Z-octadecenoate)) in macrophages. Also involved in organ detoxification by hydrolyzing exogenous organophosphorus compounds. The protein is Neutral cholesterol ester hydrolase 1 (Nceh1) of Rattus norvegicus (Rat).